A 214-amino-acid polypeptide reads, in one-letter code: MINRTSIIKQPDKISFFYDVYKLQKEYQDSLISGKSNMNFIWLGEHQLCYTVGRGSNMDNLLFSADEQDVFKIDRGGEVTCHMPGQLVTYLVLDLSNLNKDLNWYLRKIEKIIIKTLRSFNINCSTKDGFTGVWIGERKIASIGIGCKRWVTIHGFSINVNCKLENFNKIVPCGIKGCQMVNMSDYNKNVDIKEVKKIVKKIIHEEFNFNFVSE.

The region spanning 35 to 211 (KSNMNFIWLG…IIHEEFNFNF (177 aa)) is the BPL/LPL catalytic domain. Substrate is bound by residues 75–82 (RGGEVTCH), 142–144 (SIG), and 155–157 (GFS). Catalysis depends on cysteine 173, which acts as the Acyl-thioester intermediate.

This sequence belongs to the LipB family.

It localises to the cytoplasm. It carries out the reaction octanoyl-[ACP] + L-lysyl-[protein] = N(6)-octanoyl-L-lysyl-[protein] + holo-[ACP] + H(+). The protein operates within protein modification; protein lipoylation via endogenous pathway; protein N(6)-(lipoyl)lysine from octanoyl-[acyl-carrier-protein]: step 1/2. Its function is as follows. Catalyzes the transfer of endogenously produced octanoic acid from octanoyl-acyl-carrier-protein onto the lipoyl domains of lipoate-dependent enzymes. Lipoyl-ACP can also act as a substrate although octanoyl-ACP is likely to be the physiological substrate. The chain is Octanoyltransferase from Prochlorococcus marinus subsp. pastoris (strain CCMP1986 / NIES-2087 / MED4).